Reading from the N-terminus, the 212-residue chain is Uracil phosphoribosyltransferase (212 aa).

5-phospho-alpha-D-ribose 1-diphosphate-binding positions include Arg78, Arg103, and Asp130–Ser138. Uracil-binding positions include Ile193 and Gly198 to Ala200. Position 199 (Asp199) interacts with 5-phospho-alpha-D-ribose 1-diphosphate.

This sequence belongs to the UPRTase family. Mg(2+) is required as a cofactor.

The enzyme catalyses UMP + diphosphate = 5-phospho-alpha-D-ribose 1-diphosphate + uracil. The protein operates within pyrimidine metabolism; UMP biosynthesis via salvage pathway; UMP from uracil: step 1/1. With respect to regulation, allosterically activated by GTP. Catalyzes the conversion of uracil and 5-phospho-alpha-D-ribose 1-diphosphate (PRPP) to UMP and diphosphate. The sequence is that of Uracil phosphoribosyltransferase from Stutzerimonas stutzeri (strain A1501) (Pseudomonas stutzeri).